The chain runs to 275 residues: MPELPEVEVTRRGIEPFVAGRRVERVDVRTAMLRWPVPAGLAEQLRAREVLAVERRGKYLLFEVDAGWFIVHLGMTGTLRVLPAAGVPVAAKHDHIDWIFDEFVLRFRDPRRFGAVLWHPREAGDVHAHPLLASLGVEPFSPAFTGALLHARTRGRTVSVKQALLAGDMVVGVGNIYASESLFRAGIRPTTAAGKVSLPRYERLADAVRATLADAIERGGSTLRDFVGSNGESGYFQLDCFVYDRAGQPCRVCGTPVRQIVQGQRSTYFCPTCQR.

Pro2 acts as the Schiff-base intermediate with DNA in catalysis. Glu3 functions as the Proton donor in the catalytic mechanism. Residue Lys58 is the Proton donor; for beta-elimination activity of the active site. Residues His93, Arg111, and Arg156 each contribute to the DNA site. Residues 241–275 (FVYDRAGQPCRVCGTPVRQIVQGQRSTYFCPTCQR) form an FPG-type zinc finger. Residue Arg265 is the Proton donor; for delta-elimination activity of the active site.

The protein belongs to the FPG family. In terms of assembly, monomer. Zn(2+) serves as cofactor.

The catalysed reaction is Hydrolysis of DNA containing ring-opened 7-methylguanine residues, releasing 2,6-diamino-4-hydroxy-5-(N-methyl)formamidopyrimidine.. The enzyme catalyses 2'-deoxyribonucleotide-(2'-deoxyribose 5'-phosphate)-2'-deoxyribonucleotide-DNA = a 3'-end 2'-deoxyribonucleotide-(2,3-dehydro-2,3-deoxyribose 5'-phosphate)-DNA + a 5'-end 5'-phospho-2'-deoxyribonucleoside-DNA + H(+). Its function is as follows. Involved in base excision repair of DNA damaged by oxidation or by mutagenic agents. Acts as a DNA glycosylase that recognizes and removes damaged bases. Has a preference for oxidized purines, such as 7,8-dihydro-8-oxoguanine (8-oxoG). Has AP (apurinic/apyrimidinic) lyase activity and introduces nicks in the DNA strand. Cleaves the DNA backbone by beta-delta elimination to generate a single-strand break at the site of the removed base with both 3'- and 5'-phosphates. The sequence is that of Formamidopyrimidine-DNA glycosylase from Burkholderia cenocepacia (strain HI2424).